The sequence spans 156 residues: Small ribosomal subunit protein uS7 (156 aa).

The protein belongs to the universal ribosomal protein uS7 family. Part of the 30S ribosomal subunit. Contacts proteins S9 and S11.

One of the primary rRNA binding proteins, it binds directly to 16S rRNA where it nucleates assembly of the head domain of the 30S subunit. Is located at the subunit interface close to the decoding center, probably blocks exit of the E-site tRNA. The protein is Small ribosomal subunit protein uS7 of Rhizorhabdus wittichii (strain DSM 6014 / CCUG 31198 / JCM 15750 / NBRC 105917 / EY 4224 / RW1) (Sphingomonas wittichii).